The following is a 403-amino-acid chain: Dual-specificity RNA methyltransferase RlmN (403 aa).

Catalysis depends on Glu126, which acts as the Proton acceptor. The Radical SAM core domain maps to Glu132–Leu375. A disulfide bridge connects residues Cys139 and Cys378. Cys146, Cys150, and Cys153 together coordinate [4Fe-4S] cluster. S-adenosyl-L-methionine-binding positions include Gly204–Glu205, Ser236, Ser258–His260, and Asn335. The active-site S-methylcysteine intermediate is Cys378.

The protein belongs to the radical SAM superfamily. RlmN family. The cofactor is [4Fe-4S] cluster.

The protein localises to the cytoplasm. The enzyme catalyses adenosine(2503) in 23S rRNA + 2 reduced [2Fe-2S]-[ferredoxin] + 2 S-adenosyl-L-methionine = 2-methyladenosine(2503) in 23S rRNA + 5'-deoxyadenosine + L-methionine + 2 oxidized [2Fe-2S]-[ferredoxin] + S-adenosyl-L-homocysteine. The catalysed reaction is adenosine(37) in tRNA + 2 reduced [2Fe-2S]-[ferredoxin] + 2 S-adenosyl-L-methionine = 2-methyladenosine(37) in tRNA + 5'-deoxyadenosine + L-methionine + 2 oxidized [2Fe-2S]-[ferredoxin] + S-adenosyl-L-homocysteine. Specifically methylates position 2 of adenine 2503 in 23S rRNA and position 2 of adenine 37 in tRNAs. m2A2503 modification seems to play a crucial role in the proofreading step occurring at the peptidyl transferase center and thus would serve to optimize ribosomal fidelity. The polypeptide is Dual-specificity RNA methyltransferase RlmN (Bradyrhizobium sp. (strain BTAi1 / ATCC BAA-1182)).